Consider the following 198-residue polypeptide: FMN-dependent NADH:quinone oxidoreductase (198 aa).

FMN-binding positions include S10, 16–18, 94–97, and 138–141; these read SQS, MYNF, and TRGG.

Belongs to the azoreductase type 1 family. As to quaternary structure, homodimer. Requires FMN as cofactor.

It carries out the reaction 2 a quinone + NADH + H(+) = 2 a 1,4-benzosemiquinone + NAD(+). The catalysed reaction is N,N-dimethyl-1,4-phenylenediamine + anthranilate + 2 NAD(+) = 2-(4-dimethylaminophenyl)diazenylbenzoate + 2 NADH + 2 H(+). Quinone reductase that provides resistance to thiol-specific stress caused by electrophilic quinones. Functionally, also exhibits azoreductase activity. Catalyzes the reductive cleavage of the azo bond in aromatic azo compounds to the corresponding amines. This Shewanella baltica (strain OS195) protein is FMN-dependent NADH:quinone oxidoreductase.